An 876-amino-acid chain; its full sequence is Leucine--tRNA ligase (876 aa).

Residues 43–53 carry the 'HIGH' region motif; it reads PYPSGRIHMGH. The short motif at 632 to 636 is the 'KMSKS' region element; sequence KMSKS. Position 635 (Lys-635) interacts with ATP.

The protein belongs to the class-I aminoacyl-tRNA synthetase family.

It localises to the cytoplasm. The enzyme catalyses tRNA(Leu) + L-leucine + ATP = L-leucyl-tRNA(Leu) + AMP + diphosphate. This is Leucine--tRNA ligase from Sinorhizobium medicae (strain WSM419) (Ensifer medicae).